Here is a 315-residue protein sequence, read N- to C-terminus: 4-hydroxy-3-methylbut-2-enyl diphosphate reductase (315 aa).

[4Fe-4S] cluster is bound at residue Cys12. Residues His41 and His74 each coordinate (2E)-4-hydroxy-3-methylbut-2-enyl diphosphate. Dimethylallyl diphosphate-binding residues include His41 and His74. Isopentenyl diphosphate contacts are provided by His41 and His74. [4Fe-4S] cluster is bound at residue Cys96. His124 provides a ligand contact to (2E)-4-hydroxy-3-methylbut-2-enyl diphosphate. His124 provides a ligand contact to dimethylallyl diphosphate. His124 is a binding site for isopentenyl diphosphate. Glu126 acts as the Proton donor in catalysis. Thr168 lines the (2E)-4-hydroxy-3-methylbut-2-enyl diphosphate pocket. Cys198 lines the [4Fe-4S] cluster pocket. Ser226, Ser227, Asn228, and Ser270 together coordinate (2E)-4-hydroxy-3-methylbut-2-enyl diphosphate. 4 residues coordinate dimethylallyl diphosphate: Ser226, Ser227, Asn228, and Ser270. Residues Ser226, Ser227, Asn228, and Ser270 each coordinate isopentenyl diphosphate.

The protein belongs to the IspH family. [4Fe-4S] cluster is required as a cofactor.

The catalysed reaction is isopentenyl diphosphate + 2 oxidized [2Fe-2S]-[ferredoxin] + H2O = (2E)-4-hydroxy-3-methylbut-2-enyl diphosphate + 2 reduced [2Fe-2S]-[ferredoxin] + 2 H(+). It carries out the reaction dimethylallyl diphosphate + 2 oxidized [2Fe-2S]-[ferredoxin] + H2O = (2E)-4-hydroxy-3-methylbut-2-enyl diphosphate + 2 reduced [2Fe-2S]-[ferredoxin] + 2 H(+). The protein operates within isoprenoid biosynthesis; dimethylallyl diphosphate biosynthesis; dimethylallyl diphosphate from (2E)-4-hydroxy-3-methylbutenyl diphosphate: step 1/1. It functions in the pathway isoprenoid biosynthesis; isopentenyl diphosphate biosynthesis via DXP pathway; isopentenyl diphosphate from 1-deoxy-D-xylulose 5-phosphate: step 6/6. Its function is as follows. Catalyzes the conversion of 1-hydroxy-2-methyl-2-(E)-butenyl 4-diphosphate (HMBPP) into a mixture of isopentenyl diphosphate (IPP) and dimethylallyl diphosphate (DMAPP). Acts in the terminal step of the DOXP/MEP pathway for isoprenoid precursor biosynthesis. The chain is 4-hydroxy-3-methylbut-2-enyl diphosphate reductase from Pseudomonas putida (strain W619).